A 312-amino-acid polypeptide reads, in one-letter code: Elongation factor Ts (312 aa).

Positions 84–87 (TDFV) are involved in Mg(2+) ion dislocation from EF-Tu.

It belongs to the EF-Ts family.

The protein resides in the cytoplasm. Associates with the EF-Tu.GDP complex and induces the exchange of GDP to GTP. It remains bound to the aminoacyl-tRNA.EF-Tu.GTP complex up to the GTP hydrolysis stage on the ribosome. The protein is Elongation factor Ts of Caulobacter vibrioides (strain ATCC 19089 / CIP 103742 / CB 15) (Caulobacter crescentus).